We begin with the raw amino-acid sequence, 690 residues long: Elongation factor G (690 aa).

Positions 8–283 (SRCRNIGIMA…AVVDFLPSPS (276 aa)) constitute a tr-type G domain. GTP-binding positions include 17-24 (AHIDAGKT), 81-85 (DTPGH), and 135-138 (NKMD).

Belongs to the TRAFAC class translation factor GTPase superfamily. Classic translation factor GTPase family. EF-G/EF-2 subfamily.

The protein localises to the cytoplasm. Its function is as follows. Catalyzes the GTP-dependent ribosomal translocation step during translation elongation. During this step, the ribosome changes from the pre-translocational (PRE) to the post-translocational (POST) state as the newly formed A-site-bound peptidyl-tRNA and P-site-bound deacylated tRNA move to the P and E sites, respectively. Catalyzes the coordinated movement of the two tRNA molecules, the mRNA and conformational changes in the ribosome. The chain is Elongation factor G from Anaplasma marginale (strain St. Maries).